The primary structure comprises 421 residues: Testin (421 aa).

The PET domain occupies 92–199 (MILTNPVAAK…GDVKLPCEMD (108 aa)). A disordered region spans residues 133–164 (EKQPVAGSEGAQYRKKQLAKQLPAHDQDPSKC). The span at 155 to 164 (PAHDQDPSKC) shows a compositional bias: basic and acidic residues. LIM zinc-binding domains lie at 234–297 (YSCY…CDSE), 299–359 (PRCA…NHAV), and 362–421 (QGCH…KMMS).

This sequence belongs to the prickle / espinas / testin family. As to quaternary structure, interacts via LIM domain 1 with ZYX. Interacts (via LIM domain 3) with ENAH and VASP. Interacts with ALKBH4, talin, actin, alpha-actinin, GRIP1 and PXN. Interacts (via LIM domain 2) with ACTL7A (via N-terminus). Heterodimer with ACTL7A; the heterodimer interacts with ENAH to form a heterotrimer.

The protein localises to the cytoplasm. The protein resides in the cell junction. It is found in the focal adhesion. Scaffold protein that may play a role in cell adhesion, cell spreading and in the reorganization of the actin cytoskeleton. Plays a role in the regulation of cell proliferation. May act as a tumor suppressor. In Aotus nancymaae (Ma's night monkey), this protein is Testin (TES).